Here is a 132-residue protein sequence, read N- to C-terminus: uncharacterized protein (132 aa).

Transmembrane regions (helical) follow at residues 15-37 (FPEY…LLLY), 49-71 (AFIP…LRLF), 81-103 (VILT…LALV), and 110-129 (LAAT…MAFV).

The protein localises to the cell membrane. This is an uncharacterized protein from Archaeoglobus fulgidus (strain ATCC 49558 / DSM 4304 / JCM 9628 / NBRC 100126 / VC-16).